We begin with the raw amino-acid sequence, 406 residues long: DNA repair protein RAD55 (406 aa).

Residue 43–50 coordinates ATP; sequence GPPGIGKT. The tract at residues 385–406 is disordered; sequence DSNDNPLPNAEGKEEIIYDSEG.

This sequence belongs to the RecA family. RAD55 subfamily.

The protein resides in the nucleus. In terms of biological role, required for radiation resistance and meiotic viability and presumably acts in recombination and recombinational DNA repair pathways. In Saccharomyces cerevisiae (strain ATCC 204508 / S288c) (Baker's yeast), this protein is DNA repair protein RAD55 (RAD55).